Reading from the N-terminus, the 320-residue chain is tRNA U34 carboxymethyltransferase (320 aa).

Carboxy-S-adenosyl-L-methionine contacts are provided by residues Lys89, Trp103, Lys108, Gly128, 150–152 (DPT), 179–180 (IE), Met194, Tyr198, and Arg313.

This sequence belongs to the class I-like SAM-binding methyltransferase superfamily. CmoB family. As to quaternary structure, homotetramer.

The enzyme catalyses carboxy-S-adenosyl-L-methionine + 5-hydroxyuridine(34) in tRNA = 5-carboxymethoxyuridine(34) in tRNA + S-adenosyl-L-homocysteine + H(+). Catalyzes carboxymethyl transfer from carboxy-S-adenosyl-L-methionine (Cx-SAM) to 5-hydroxyuridine (ho5U) to form 5-carboxymethoxyuridine (cmo5U) at position 34 in tRNAs. This is tRNA U34 carboxymethyltransferase from Glaesserella parasuis serovar 5 (strain SH0165) (Haemophilus parasuis).